We begin with the raw amino-acid sequence, 1150 residues long: ATP-dependent helicase/deoxyribonuclease subunit B (1150 aa).

ATP is bound at residue 8–15 (GRAGSGKS). [4Fe-4S] cluster contacts are provided by cysteine 786, cysteine 1106, cysteine 1109, and cysteine 1115.

It belongs to the helicase family. AddB/RexB type 1 subfamily. In terms of assembly, heterodimer of AddA and AddB. The cofactor is Mg(2+). [4Fe-4S] cluster serves as cofactor.

In terms of biological role, the heterodimer acts as both an ATP-dependent DNA helicase and an ATP-dependent, dual-direction single-stranded exonuclease. Recognizes the chi site generating a DNA molecule suitable for the initiation of homologous recombination. The AddB subunit has 5' -&gt; 3' nuclease activity but not helicase activity. The protein is ATP-dependent helicase/deoxyribonuclease subunit B of Clostridium botulinum (strain Langeland / NCTC 10281 / Type F).